The primary structure comprises 260 residues: Neuraminyllactose-binding hemagglutinin (260 aa).

The N-terminal stretch at 1–27 (MKANNHFKDFAWKKCLLGASVVALLVG) is a signal peptide. Residue C28 is the site of N-palmitoyl cysteine attachment. Residue C28 is the site of S-diacylglycerol cysteine attachment.

It localises to the cell outer membrane. This is Neuraminyllactose-binding hemagglutinin (hpaA) from Helicobacter pylori (strain ATCC 700392 / 26695) (Campylobacter pylori).